We begin with the raw amino-acid sequence, 185 residues long: MLKAKILFVGPCESGKTVLANFLTESSDITEYNPTQGVRILEFENPHVTSNNKGTGCEFELWDCGGDPKFESCWPALMKDSHGVVIVFNADIPSHLKEIETWYSCFVQQQFLQNTQCLLIAHHKPGSGSDKDNPALAPPLNKLKLVHSNLEDDPEEIRMEFIKYLRSIINSVSESRDREEMSIIT.

GTP contacts are provided by residues 10-17 (GPCESGKT), 63-67 (DCGGD), and 123-126 (HKPG).

It belongs to the small GTPase superfamily. Rab family. In terms of assembly, component of the IFT complex B, at least composed of IFT20, IFT22, IFT25, IFT27, IFT46, IFT52, TRAF3IP1/IFT54, IFT57, IFT74, IFT80, IFT81, and IFT88. Interacts with IFT88. Interacts with CFAP61.

Its subcellular location is the cell projection. It is found in the cilium. Functionally, small GTPase-like component of the intraflagellar transport (IFT) complex B. The chain is Intraflagellar transport protein 22 homolog (IFT22) from Bos taurus (Bovine).